The primary structure comprises 83 residues: Small ribosomal subunit protein bS16 (83 aa).

This sequence belongs to the bacterial ribosomal protein bS16 family.

This chain is Small ribosomal subunit protein bS16, found in Stutzerimonas stutzeri (strain A1501) (Pseudomonas stutzeri).